Here is a 292-residue protein sequence, read N- to C-terminus: MKVYAPATIANFGPGFDVFGLAIETPRDTVIAKESDDFRIEVEGYKVPENDENVALVAAKALFKLVGEEGGIYLKLKKGIRPKSGLGSSGASSIAGAVAAARILGVEDDEIIIRAALEGERKASGSPHGDNVVPSYYGNFTIVESLNPLRVHNIEVDFKVVVILPSVEVPTSEARKVLPKKVPLKDAVKNIALASSLVLALKEGNLEEVGRLLEDHLALPYRLSLVPWFPKVKEAAKEAGAYGVMISGSGPAVFALGENLKEIGKAMKEAFESFGIEAEYWVTKVGRGAKWC.

Residue 81 to 91 (RPKSGLGSSGA) participates in ATP binding.

It belongs to the GHMP kinase family. Homoserine kinase subfamily.

It is found in the cytoplasm. The enzyme catalyses L-homoserine + ATP = O-phospho-L-homoserine + ADP + H(+). Its pathway is amino-acid biosynthesis; L-threonine biosynthesis; L-threonine from L-aspartate: step 4/5. Its function is as follows. Catalyzes the ATP-dependent phosphorylation of L-homoserine to L-homoserine phosphate. The sequence is that of Homoserine kinase from Pyrococcus furiosus (strain ATCC 43587 / DSM 3638 / JCM 8422 / Vc1).